Here is a 349-residue protein sequence, read N- to C-terminus: PDZ and LIM domain protein 2 (349 aa).

The PDZ domain maps to 1–84 (MALTVNVVGP…PLRLQLDRSQ (84 aa)). Disordered regions lie at residues 72–95 (SASP…NGEG) and 108–147 (LRTH…PIAL). Composition is skewed to polar residues over residues 81–90 (DRSQTASPGQ) and 108–121 (LRTH…QRSA). A phosphoserine mark is found at serine 124, serine 127, serine 129, serine 134, and serine 137. Phosphothreonine occurs at positions 138 and 142. A phosphoserine mark is found at serine 143 and serine 163. Disordered regions lie at residues 168–212 (ATHH…SSLD) and 250–272 (ERGG…PTSR). The segment covering 176 to 192 (GQPTSQQAGHSSPSDST) has biased composition (polar residues). Phosphoserine occurs at positions 199, 204, 205, 209, 210, and 263. Over residues 199 to 211 (SPGRPSSPRLSSL) the composition is skewed to low complexity. Positions 260 to 270 (SSLSPKASLPT) are enriched in polar residues. The 61-residue stretch at 281 to 341 (HTCEKCSVNI…EKHARQRYSM (61 aa)) folds into the LIM zinc-binding domain.

In terms of assembly, interacts with alpha-actinins ACTN1 and ACTN4, FLNA and MYH9. Interacts (via LIM zinc-binding domain) with MKRN2. As to expression, highly expressed in cornea and lung. Expressed at intermediate level in sclera and combined tissues of the eye irido-corneal angle. Specifically expressed in the corneal epithelial cells but not in other corneal layers.

It is found in the cytoplasm. Its subcellular location is the cytoskeleton. Functionally, probable adapter protein located at the actin cytoskeleton that promotes cell attachment. Necessary for the migratory capacity of epithelial cells. Overexpression enhances cell adhesion to collagen and fibronectin and suppresses anchorage independent growth. May contribute to tumor cell migratory capacity. The polypeptide is PDZ and LIM domain protein 2 (Pdlim2) (Rattus norvegicus (Rat)).